A 409-amino-acid chain; its full sequence is Glycosaminoglycan xylosylkinase (409 aa).

Residues 1–6 (MKLKQR) lie on the Cytoplasmic side of the membrane. A helical; Signal-anchor for type II membrane protein transmembrane segment spans residues 7–25 (VVLLAILLVIFIFTKVFLI). Residues 26–409 (DNLDTSAANR…VEDRMPLSHL (384 aa)) lie on the Lumenal side of the membrane. ATP-binding residues include glutamine 107 and lysine 123. Mn(2+) is bound at residue aspartate 142. Asparagine 193 carries N-linked (GlcNAc...) asparagine glycosylation. 2 disulfides stabilise this stretch: cysteine 196–cysteine 211 and cysteine 201–cysteine 204. 222–225 (TLWL) is a binding site for ATP. 2 disulfide bridges follow: cysteine 257–cysteine 331 and cysteine 332–cysteine 389. Aspartate 289 is an active-site residue. ATP-binding residues include glutamate 294 and aspartate 309. Mn(2+) is bound at residue aspartate 309.

The protein belongs to the FAM20 family. Mn(2+) is required as a cofactor. As to expression, widely expressed. Strongly expressed in pancreas, spleen and fetal liver.

The protein resides in the golgi apparatus membrane. It carries out the reaction 3-O-(beta-D-galactosyl-(1-&gt;3)-beta-D-galactosyl-(1-&gt;4)-beta-D-xylosyl)-L-seryl-[protein] + ATP = 3-O-(beta-D-galactosyl-(1-&gt;3)-beta-D-galactosyl-(1-&gt;4)-beta-D-2-O-phosphoxylosyl)-L-seryl-[protein] + ADP + H(+). Responsible for the 2-O-phosphorylation of xylose in the glycosaminoglycan-protein linkage region of proteoglycans thereby regulating the amount of mature GAG chains. Sulfated glycosaminoglycans (GAGs), including heparan sulfate and chondroitin sulfate, are synthesized on the so-called common GAG-protein linkage region (GlcUAbeta1-3Galbeta1-3Galbeta1-4Xylbeta1-O-Ser) of core proteins, which is formed by the stepwise addition of monosaccharide residues by the respective specific glycosyltransferases. Xylose 2-O-phosphorylation may influence the catalytic activity of B3GAT3 (GlcAT-I) which completes the precursor tetrasaccharide of GAG-protein linkage regions on which the repeating disaccharide region is synthesized. The chain is Glycosaminoglycan xylosylkinase from Homo sapiens (Human).